A 502-amino-acid polypeptide reads, in one-letter code: UDP-N-acetylmuramoylalanine--D-glutamate ligase (502 aa).

129-135 (GTNGKTT) contacts ATP.

This sequence belongs to the MurCDEF family.

Its subcellular location is the cytoplasm. The enzyme catalyses UDP-N-acetyl-alpha-D-muramoyl-L-alanine + D-glutamate + ATP = UDP-N-acetyl-alpha-D-muramoyl-L-alanyl-D-glutamate + ADP + phosphate + H(+). Its pathway is cell wall biogenesis; peptidoglycan biosynthesis. Its function is as follows. Cell wall formation. Catalyzes the addition of glutamate to the nucleotide precursor UDP-N-acetylmuramoyl-L-alanine (UMA). This Burkholderia ambifaria (strain MC40-6) protein is UDP-N-acetylmuramoylalanine--D-glutamate ligase.